The sequence spans 317 residues: Putative carboxypeptidase RP402 (317 aa).

Catalysis depends on S125, which acts as the Nucleophile. Catalysis depends on charge relay system residues E225 and H288.

The protein belongs to the peptidase S66 family.

The polypeptide is Putative carboxypeptidase RP402 (Rickettsia prowazekii (strain Madrid E)).